Here is a 473-residue protein sequence, read N- to C-terminus: Photosystem II CP43 reaction center protein (473 aa).

A propeptide spanning residues M1–E14 is cleaved from the precursor. T15 carries the post-translational modification N-acetylthreonine. T15 bears the Phosphothreonine mark. The next 5 membrane-spanning stretches (helical) occupy residues L69–A93, L134–N155, K178–T200, K255–S275, and W291–A312. [CaMn4O5] cluster is bound at residue E367. A helical membrane pass occupies residues R447–P471.

It belongs to the PsbB/PsbC family. PsbC subfamily. PSII is composed of 1 copy each of membrane proteins PsbA, PsbB, PsbC, PsbD, PsbE, PsbF, PsbH, PsbI, PsbJ, PsbK, PsbL, PsbM, PsbT, PsbX, PsbY, PsbZ, Psb30/Ycf12, at least 3 peripheral proteins of the oxygen-evolving complex and a large number of cofactors. It forms dimeric complexes. Requires Binds multiple chlorophylls and provides some of the ligands for the Ca-4Mn-5O cluster of the oxygen-evolving complex. It may also provide a ligand for a Cl- that is required for oxygen evolution. PSII binds additional chlorophylls, carotenoids and specific lipids. as cofactor.

The protein localises to the plastid. It localises to the chloroplast thylakoid membrane. Its function is as follows. One of the components of the core complex of photosystem II (PSII). It binds chlorophyll and helps catalyze the primary light-induced photochemical processes of PSII. PSII is a light-driven water:plastoquinone oxidoreductase, using light energy to abstract electrons from H(2)O, generating O(2) and a proton gradient subsequently used for ATP formation. This chain is Photosystem II CP43 reaction center protein, found in Nephroselmis olivacea (Green alga).